The primary structure comprises 325 residues: Protease HtpX homolog (325 aa).

Residues 20-40 form a helical membrane-spanning segment; it reads IGYLLGGGGGMMIALVIAVAM. Zn(2+) is bound at residue H130. Residue E131 is part of the active site. H134 lines the Zn(2+) pocket. 2 consecutive transmembrane segments (helical) span residues 145–165 and 173–193; these read IVATLAGAISMLGNFAFFLGG and VMGVVGTLLAMIVAPFGAMIV. Position 202 (E202) interacts with Zn(2+). Residues 286 to 325 are disordered; it reads SAAMTARAAAPSQNSGPWGQRSDNAGGNSNGGSRYRGPWS. Low complexity predominate over residues 306 to 325; the sequence is RSDNAGGNSNGGSRYRGPWS.

Belongs to the peptidase M48B family. The cofactor is Zn(2+).

It localises to the cell inner membrane. The polypeptide is Protease HtpX homolog (Brucella melitensis biotype 2 (strain ATCC 23457)).